A 366-amino-acid polypeptide reads, in one-letter code: ABI gene family member 3 (366 aa).

Positions 33–61 (CEDNYVQATDKRKALEETMAFTTQALASV) form a coiled coil. The disordered stretch occupies residues 161 to 195 (SRTGTLSRKSIKAPATPASATLGRPPRIPEPVHLP). Phosphoserine is present on residues Ser213 and Ser216. The disordered stretch occupies residues 215–302 (GSAEGVGGAP…PPPGFGPDEP (88 aa)). Residues 232 to 248 (PPAPPLPSSLDPPPPPA) show a composition bias toward pro residues. One can recognise an SH3 domain in the interval 308–366 (SYLEKVVTLYPYTSQKDNELSFSEGTVICVTRRYSDGWCEGVSSEGTGFFPGNYVEPSC). Ser342 is modified (phosphoserine).

Belongs to the ABI family. May interact with PAK1 and PAK2. Probably interacts with TARSH. In terms of tissue distribution, expressed in heart, lung, liver, pancreas, kidney, placenta and at low levels in brain and skeletal muscle.

It is found in the cytoplasm. In terms of biological role, may inhibit tumor metastasis. In vitro, reduces cell motility. The sequence is that of ABI gene family member 3 (ABI3) from Homo sapiens (Human).